A 191-amino-acid chain; its full sequence is Fe/S biogenesis protein NfuA (191 aa).

[4Fe-4S] cluster-binding residues include Cys-149 and Cys-152.

This sequence belongs to the NfuA family. In terms of assembly, homodimer. It depends on [4Fe-4S] cluster as a cofactor.

In terms of biological role, involved in iron-sulfur cluster biogenesis. Binds a 4Fe-4S cluster, can transfer this cluster to apoproteins, and thereby intervenes in the maturation of Fe/S proteins. Could also act as a scaffold/chaperone for damaged Fe/S proteins. In Hamiltonella defensa subsp. Acyrthosiphon pisum (strain 5AT), this protein is Fe/S biogenesis protein NfuA.